Consider the following 280-residue polypeptide: ESX-1 secretion-associated protein EspJ (280 aa).

Phosphoserine is present on serine 70. Composition is skewed to low complexity over residues 167-181 and 246-280; these read QTIS…QSAQ and PAQA…TTTL. A disordered region spans residues 167 to 280; that stretch reads QTISQTAQQA…TPAPSTTTTL (114 aa).

Post-translationally, phosphorylated at Ser-70.

It localises to the secreted. Functionally, could be involved in regulation of growth and intracellular survival. In Mycobacterium tuberculosis (strain CDC 1551 / Oshkosh), this protein is ESX-1 secretion-associated protein EspJ.